The following is a 712-amino-acid chain: Protein SDA1 homolog (712 aa).

Thr234 carries the post-translational modification Phosphothreonine. The residue at position 236 (Ser236) is a Phosphoserine. 2 disordered regions span residues Thr488–Ile573 and Val662–Lys712. Composition is skewed to acidic residues over residues Ile491–Asp501 and Gly516–Glu559. Residues Glu560–Arg572 show a composition bias toward basic and acidic residues. Composition is skewed to basic residues over residues Arg671 to Lys692 and Ala700 to Lys712.

Belongs to the SDA1 family.

It localises to the nucleus. The protein localises to the nucleolus. Its function is as follows. Required for 60S pre-ribosomal subunits export to the cytoplasm. In Drosophila melanogaster (Fruit fly), this protein is Protein SDA1 homolog (Mys45A).